Consider the following 140-residue polypeptide: Protein SNA4 (140 aa).

Residues 1 to 8 (MCCYCVCC) lie on the Cytoplasmic side of the membrane. S-palmitoyl cysteine attachment occurs at residues cysteine 2, cysteine 3, cysteine 5, cysteine 7, and cysteine 8. Residues 9–29 (TVSDFILYIVAFFFPPAAVLL) traverse the membrane as a helical segment. At 30-41 (RSGPCSSDFLLN) the chain is on the vacuolar side. The helical transmembrane segment at 42–62 (VLLTLLGFLPGMLHAFYYITI) threads the bilayer. The Cytoplasmic portion of the chain corresponds to 63 to 140 (TSPLRNAEYV…LVESPPPYVP (78 aa)). A disordered region spans residues 84 to 140 (RNVPSNRPQNSQTPQNRPQQGSSARNVYPSVETPLLQGAAPHDNKQSLVESPPPYVP). A compositionally biased stretch (polar residues) spans 85 to 108 (NVPSNRPQNSQTPQNRPQQGSSAR). A Glycyl lysine isopeptide (Lys-Gly) (interchain with G-Cter in ubiquitin) cross-link involves residue lysine 128. Position 134 is a phosphoserine (serine 134).

This sequence belongs to the UPF0057 (PMP3) family.

It is found in the vacuole membrane. The sequence is that of Protein SNA4 (SNA4) from Saccharomyces cerevisiae (strain ATCC 204508 / S288c) (Baker's yeast).